A 355-amino-acid polypeptide reads, in one-letter code: 3-dehydroquinate synthase (355 aa).

NAD(+)-binding positions include 106–110, 130–131, Lys-143, and Lys-152; these read GVVGD and TS. Glu-185, His-246, and His-262 together coordinate Zn(2+).

This sequence belongs to the sugar phosphate cyclases superfamily. Dehydroquinate synthase family. Co(2+) serves as cofactor. Zn(2+) is required as a cofactor. It depends on NAD(+) as a cofactor.

It is found in the cytoplasm. It catalyses the reaction 7-phospho-2-dehydro-3-deoxy-D-arabino-heptonate = 3-dehydroquinate + phosphate. The protein operates within metabolic intermediate biosynthesis; chorismate biosynthesis; chorismate from D-erythrose 4-phosphate and phosphoenolpyruvate: step 2/7. Its function is as follows. Catalyzes the conversion of 3-deoxy-D-arabino-heptulosonate 7-phosphate (DAHP) to dehydroquinate (DHQ). The polypeptide is 3-dehydroquinate synthase (Latilactobacillus sakei subsp. sakei (strain 23K) (Lactobacillus sakei subsp. sakei)).